The primary structure comprises 198 residues: Putative pseudouridine methyltransferase (198 aa).

2 residues coordinate S-adenosyl-L-methionine: leucine 132 and cysteine 186.

The protein belongs to the methyltransferase superfamily. TrmY family.

The protein localises to the cytoplasm. The protein is Putative pseudouridine methyltransferase of Vibrio vulnificus (strain CMCP6).